The chain runs to 126 residues: Small ribosomal subunit protein uS12 (126 aa).

A disordered region spans residues 1 to 26; the sequence is MPTINQLVRKGRASETTKSKSPALQD. A 3-methylthioaspartic acid modification is found at aspartate 89. The disordered stretch occupies residues 103–126; that stretch reads DTQGVKDRKQARSKYGAKRAKAGK. Basic residues predominate over residues 113–126; that stretch reads ARSKYGAKRAKAGK.

Belongs to the universal ribosomal protein uS12 family. In terms of assembly, part of the 30S ribosomal subunit. Contacts proteins S8 and S17. May interact with IF1 in the 30S initiation complex.

Functionally, with S4 and S5 plays an important role in translational accuracy. Its function is as follows. Interacts with and stabilizes bases of the 16S rRNA that are involved in tRNA selection in the A site and with the mRNA backbone. Located at the interface of the 30S and 50S subunits, it traverses the body of the 30S subunit contacting proteins on the other side and probably holding the rRNA structure together. The combined cluster of proteins S8, S12 and S17 appears to hold together the shoulder and platform of the 30S subunit. This chain is Small ribosomal subunit protein uS12, found in Paraburkholderia xenovorans (strain LB400).